The sequence spans 190 residues: Peptide deformylase (190 aa).

The Fe cation site is built by Cys94 and His136. The active site involves Glu137. His140 provides a ligand contact to Fe cation.

The protein belongs to the polypeptide deformylase family. It depends on Fe(2+) as a cofactor.

It catalyses the reaction N-terminal N-formyl-L-methionyl-[peptide] + H2O = N-terminal L-methionyl-[peptide] + formate. Its function is as follows. Removes the formyl group from the N-terminal Met of newly synthesized proteins. Requires at least a dipeptide for an efficient rate of reaction. N-terminal L-methionine is a prerequisite for activity but the enzyme has broad specificity at other positions. In Chlorobium luteolum (strain DSM 273 / BCRC 81028 / 2530) (Pelodictyon luteolum), this protein is Peptide deformylase.